The following is a 220-amino-acid chain: Large ribosomal subunit protein uL3 (220 aa).

Positions 132-153 (SGRASHGNSRSHNVPGSIGMAQ) are disordered. Polar residues predominate over residues 133–145 (GRASHGNSRSHNV). At Q153 the chain carries N5-methylglutamine.

This sequence belongs to the universal ribosomal protein uL3 family. Part of the 50S ribosomal subunit. Forms a cluster with proteins L14 and L19. In terms of processing, methylated by PrmB.

One of the primary rRNA binding proteins, it binds directly near the 3'-end of the 23S rRNA, where it nucleates assembly of the 50S subunit. In Ralstonia nicotianae (strain ATCC BAA-1114 / GMI1000) (Ralstonia solanacearum), this protein is Large ribosomal subunit protein uL3.